We begin with the raw amino-acid sequence, 161 residues long: Nucleotide-binding protein Geob_0921 (161 aa).

This sequence belongs to the YajQ family.

Functionally, nucleotide-binding protein. This chain is Nucleotide-binding protein Geob_0921, found in Geotalea daltonii (strain DSM 22248 / JCM 15807 / FRC-32) (Geobacter daltonii).